Consider the following 210-residue polypeptide: Thymidylate kinase (210 aa).

11 to 18 contacts ATP; the sequence is GLEGAGKS.

Belongs to the thymidylate kinase family.

It catalyses the reaction dTMP + ATP = dTDP + ADP. Phosphorylation of dTMP to form dTDP in both de novo and salvage pathways of dTTP synthesis. The protein is Thymidylate kinase of Vibrio parahaemolyticus serotype O3:K6 (strain RIMD 2210633).